The primary structure comprises 545 residues: CTP synthase (545 aa).

The tract at residues 1 to 266 is amidoligase domain; the sequence is MATNYIFVTG…DTFVCDRFRL (266 aa). Ser14 provides a ligand contact to CTP. UTP is bound at residue Ser14. Residues 15–20 and Asp72 contribute to the ATP site; that span reads SLGKGI. Residues Asp72 and Glu140 each contribute to the Mg(2+) site. Residues 147–149, 187–192, and Lys223 contribute to the CTP site; these read DIE and KTKPTQ. UTP-binding positions include 187–192 and Lys223; that span reads KTKPTQ. ATP is bound at residue 239-241; the sequence is KDV. The Glutamine amidotransferase type-1 domain occupies 291–542; sequence TIGMVGKYVE…VKAAKDYQDS (252 aa). Gly352 is an L-glutamine binding site. Cys379 functions as the Nucleophile; for glutamine hydrolysis in the catalytic mechanism. Residues 380-383, Glu403, and Arg470 each bind L-glutamine; that span reads LGMQ. Catalysis depends on residues His515 and Glu517.

This sequence belongs to the CTP synthase family. As to quaternary structure, homotetramer.

The catalysed reaction is UTP + L-glutamine + ATP + H2O = CTP + L-glutamate + ADP + phosphate + 2 H(+). The enzyme catalyses L-glutamine + H2O = L-glutamate + NH4(+). It carries out the reaction UTP + NH4(+) + ATP = CTP + ADP + phosphate + 2 H(+). It functions in the pathway pyrimidine metabolism; CTP biosynthesis via de novo pathway; CTP from UDP: step 2/2. Allosterically activated by GTP, when glutamine is the substrate; GTP has no effect on the reaction when ammonia is the substrate. The allosteric effector GTP functions by stabilizing the protein conformation that binds the tetrahedral intermediate(s) formed during glutamine hydrolysis. Inhibited by the product CTP, via allosteric rather than competitive inhibition. Functionally, catalyzes the ATP-dependent amination of UTP to CTP with either L-glutamine or ammonia as the source of nitrogen. Regulates intracellular CTP levels through interactions with the four ribonucleotide triphosphates. The chain is CTP synthase from Actinobacillus pleuropneumoniae serotype 7 (strain AP76).